Here is a 289-residue protein sequence, read N- to C-terminus: Cuticle collagen 19 (289 aa).

Positions 1–18 are cleaved as a signal peptide; sequence MGKLIVVGSCGVLVCVLA. Positions 95 to 289 are disordered; the sequence is SEGCPAGPPG…PCPSRAAYKA (195 aa). Triple-helical region regions lie at residues 101–130 and 147–269; these read GPPG…PGVI and GRPG…KGED. Over residues 162–183 the composition is skewed to gly residues; that stretch reads GPAGGNGRRGPPGPVGGPGEQG. Low complexity-rich tracts occupy residues 184-207 and 223-239; these read PQGD…GEPG and PRGE…PGND.

It belongs to the cuticular collagen family. In terms of assembly, collagen polypeptide chains are complexed within the cuticle by disulfide bonds and other types of covalent cross-links.

Functionally, nematode cuticles are composed largely of collagen-like proteins. The cuticle functions both as an exoskeleton and as a barrier to protect the worm from its environment. This Caenorhabditis elegans protein is Cuticle collagen 19 (col-19).